The sequence spans 117 residues: Large ribosomal subunit protein uL18 (117 aa).

Belongs to the universal ribosomal protein uL18 family. In terms of assembly, part of the 50S ribosomal subunit; part of the 5S rRNA/L5/L18/L25 subcomplex. Contacts the 5S and 23S rRNAs.

Functionally, this is one of the proteins that bind and probably mediate the attachment of the 5S RNA into the large ribosomal subunit, where it forms part of the central protuberance. The polypeptide is Large ribosomal subunit protein uL18 (Haemophilus influenzae (strain 86-028NP)).